The following is a 572-amino-acid chain: Hemolysin-1 (572 aa).

Its function is as follows. Bacterial hemolysins are exotoxins that attack blood cell membranes and cause cell rupture by mechanisms not clearly defined. This is Hemolysin-1 (ash1) from Aeromonas salmonicida.